Here is a 1494-residue protein sequence, read N- to C-terminus: Methyl-CpG-binding domain protein 5 (1494 aa).

In terms of domain architecture, MBD spans 11 to 81 (DKEGGLPAIQ…KVFNFDPGAA (71 aa)). A required for interaction with ASXL1/2/3 region spans residues 57 to 68 (DGTCKCGLECPL). Disordered stretches follow at residues 123 to 152 (LVLT…RNKS), 200 to 274 (RQRL…TPLS), 329 to 350 (HHKP…QKKP), 450 to 522 (IGRI…KDIP), 594 to 641 (LAGN…QSGR), 809 to 848 (PNPP…SSSI), 1154 to 1173 (HDGR…LDHG), and 1345 to 1375 (VNGC…SNEL). Over residues 333 to 343 (PQGPPPPPPPS) the composition is skewed to pro residues. Low complexity-rich tracts occupy residues 499–511 (SPRP…PSTK) and 594–612 (LAGN…AGSG). 2 stretches are compositionally biased toward polar residues: residues 614-624 (TEGHSTLNTMF) and 813-835 (QSRI…YNQT). Over residues 836–848 (SSEAGGSGPSSSI) the composition is skewed to low complexity. In terms of domain architecture, PWWP spans 1385–1409 (VGDLVWGQIKGLTSWPGKLVREDDV). Positions 1468–1494 (MSGTVHQIPQGDRQMRPPKPKRRKISR) are disordered. Over residues 1483–1494 (RPPKPKRRKISR) the composition is skewed to basic residues.

As to quaternary structure, core component of the polycomb repressive deubiquitinase (PR-DUB) complex, at least composed of BAP1, one of ASXL1, ASXL2 or (probably) ASXL3, and one of MBD5 or MBD6. Distinct combinations of ASXL and MBD proteins may preferentially bind specific histone modification marks. The PR-DUB core associates with a number of accessory proteins, including FOXK1, FOXK2, KDM1B, HCFC1 and OGT; KDM1B specifically associates with ASXL2 PR-DUB complexes. Interacts (via MBD domain) with ASXL1, ASXL2 and ASXL3 (via PHD domain); the interaction is probably direct, mediates association with other PR-DUB complex core components. As to expression, detected in heart, placenta, liver, skeletal muscle, kidney and pancreas.

It is found in the nucleus. The protein localises to the chromosome. Functionally, non-catalytic component of the polycomb repressive deubiquitinase (PR-DUB) complex, a complex that specifically mediates deubiquitination of histone H2A monoubiquitinated at 'Lys-120' (H2AK119ub1). Important for stability of PR-DUB components and stimulating its ubiquitinase activity. As part of the PR-DUB complex, associates with chromatin enriched in histone marks H3K4me1, H3K4me3, and H3K27Ac, but not in H3K27me3. The PR-DUB complex is an epigenetic regulator of gene expression, including genes involved in cell growth and survivability. MBD5 and MBD6 containing complexes associate with distinct chromatin regions enriched in genes involved in different pathways. Heterochromatin recruitment is not mediated by DNA methylation. The PR-DUB complex is an epigenetic regulator of gene expression, including genes involved in development, cell communication, signaling, cell proliferation and cell viability. The protein is Methyl-CpG-binding domain protein 5 (MBD5) of Homo sapiens (Human).